We begin with the raw amino-acid sequence, 298 residues long: Glycine--tRNA ligase alpha subunit (298 aa).

This sequence belongs to the class-II aminoacyl-tRNA synthetase family. Tetramer of two alpha and two beta subunits.

The protein localises to the cytoplasm. It catalyses the reaction tRNA(Gly) + glycine + ATP = glycyl-tRNA(Gly) + AMP + diphosphate. This chain is Glycine--tRNA ligase alpha subunit, found in Helicobacter hepaticus (strain ATCC 51449 / 3B1).